Reading from the N-terminus, the 408-residue chain is UDP-N-acetylglucosamine--dolichyl-phosphate N-acetylglucosaminephosphotransferase (408 aa).

Residues 1-10 are Lumenal-facing; sequence MWAFPELPLP. Residues 11-38 form a helical membrane-spanning segment; the sequence is LLVNLFGSLLGFVATVTLIPAFRSHFIA. The Cytoplasmic segment spans residues 39–58; the sequence is ARLCGQDLNKLSRQQIPESQ. Residues 44–46 and Glu-56 contribute to the UDP-N-acetyl-alpha-D-glucosamine site; that span reads QDL. Residues 59 to 78 traverse the membrane as a helical segment; that stretch reads GVICGAVFLIILFCFIPFPF. Over 79-91 the chain is Lumenal; the sequence is LNCFVEEQCKAFP. The chain crosses the membrane as a helical span at residues 92 to 118; that stretch reads HHEFVALIGALLAICCMIFLGFADDVL. At 119–121 the chain is on the cytoplasmic side; sequence NLR. Residues 122–143 form a helical membrane-spanning segment; the sequence is WRHKLLLPTAASLPLLMVYFTN. A dolichyl phosphate-binding site is contributed by Lys-125. At 144 to 166 the chain is on the lumenal side; that stretch reads FGNTTIVVPKPFRWILGLHLDLG. The N-linked (GlcNAc...) asparagine glycan is linked to Asn-146. A helical membrane pass occupies residues 167 to 186; the sequence is ILYYVYMGLLAVFCTNAINI. A dolichyl phosphate-binding site is contributed by 178-186; sequence VFCTNAINI. Asn-185 contributes to the Mg(2+) binding site. At 187–192 the chain is on the cytoplasmic side; that stretch reads LAGING. Asn-191 serves as a coordination point for UDP-N-acetyl-alpha-D-glucosamine. The chain crosses the membrane as a helical span at residues 193–213; the sequence is LEAGQSLVISASIIVFNLVEL. Topologically, residues 214–218 are lumenal; it reads EGDYR. A helical membrane pass occupies residues 219–242; the sequence is DDHVFSLYFMIPFFFTTLGLLYHN. The Cytoplasmic segment spans residues 243-250; it reads WYPSQVFV. Residues 251–269 form a helical membrane-spanning segment; the sequence is GDTFCYFAGMTFAVVGILG. A Mg(2+)-binding site is contributed by Asp-252. At 270-271 the chain is on the lumenal side; it reads HF. The helical transmembrane segment at 272–293 threads the bilayer; that stretch reads SKTMLLFFIPQVFNFLYSLPQL. At 294 to 375 the chain is on the cytoplasmic side; it reads LHAIPCPRHR…LLLKIFGPIH (82 aa). Residue 301 to 303 coordinates UDP-N-acetyl-alpha-D-glucosamine; that stretch reads RHR. The helical transmembrane segment at 376-400 threads the bilayer; sequence ERNLTLLLLLLQILSSAVTFSIRYQ. The Lumenal portion of the chain corresponds to 401–408; sequence LVRLFYDV.

The protein belongs to the glycosyltransferase 4 family. In terms of assembly, homodimer. Mg(2+) serves as cofactor.

The protein localises to the endoplasmic reticulum membrane. The catalysed reaction is a di-trans,poly-cis-dolichyl phosphate + UDP-N-acetyl-alpha-D-glucosamine = an N-acetyl-alpha-D-glucosaminyl-diphospho-di-trans,poly-cis-dolichol + UMP. The protein operates within protein modification; protein glycosylation. With respect to regulation, inhibited by natural nucleoside antibiotic tunicamycin, which acts as a structural analog and competitor of UDP-GlcNAc. In terms of biological role, UDP-N-acetylglucosamine--dolichyl-phosphate N-acetylglucosaminephosphotransferase that operates in the biosynthetic pathway of dolichol-linked oligosaccharides, the glycan precursors employed in protein asparagine (N)-glycosylation. The assembly of dolichol-linked oligosaccharides begins on the cytosolic side of the endoplasmic reticulum membrane and finishes in its lumen. The sequential addition of sugars to dolichol pyrophosphate produces dolichol-linked oligosaccharides containing fourteen sugars, including two GlcNAcs, nine mannoses and three glucoses. Once assembled, the oligosaccharide is transferred from the lipid to nascent proteins by oligosaccharyltransferases. Catalyzes the initial step of dolichol-linked oligosaccharide biosynthesis, transfering GlcNAc-1-P from cytosolic UDP-GlcNAc onto the carrier lipid dolichyl phosphate (P-dolichol), yielding GlcNAc-P-P-dolichol embedded in the cytoplasmic leaflet of the endoplasmic reticulum membrane. This chain is UDP-N-acetylglucosamine--dolichyl-phosphate N-acetylglucosaminephosphotransferase (DPAGT1), found in Cricetulus griseus (Chinese hamster).